Here is an 855-residue protein sequence, read N- to C-terminus: Mitochondrial 15S rRNA processing factor CCM1 (855 aa).

The interval proline 29–asparagine 61 is disordered. PPR repeat units lie at residues aspartate 234–leucine 265, asparagine 317–histidine 351, and aspartate 354–proline 388.

It belongs to the CCM1 family. In terms of assembly, binds to mitochondrial small subunit 15S rRNA.

Its subcellular location is the mitochondrion. In terms of biological role, regulates mitochondrial small subunit maturation by controlling 15S rRNA 5'-end processing. Localizes to the 5' precursor of the 15S rRNA in a position that is subsequently occupied by mS47 in the mature yeast mtSSU. Uses structure and sequence-specific RNA recognition, binding to a single-stranded region of the precursor and specifically recognizing bases -6 to -1. The exchange of Ccm1 for mS47 is coupled to the irreversible removal of precursor rRNA that is accompanied by conformational changes of the mitoribosomal proteins uS5m and mS26. These conformational changes signal completion of 5'-end rRNA processing through protection of the mature 5'-end of the 15S rRNA and stabilization of mS47. The removal of the 5' precursor together with the dissociation of Ccm1 may be catalyzed by the 5'-3' exoribonuclease Pet127. Involved in the specific removal of group I introns in mitochondrial encoded transcripts. The polypeptide is Mitochondrial 15S rRNA processing factor CCM1 (CCM1) (Eremothecium gossypii (strain ATCC 10895 / CBS 109.51 / FGSC 9923 / NRRL Y-1056) (Yeast)).